We begin with the raw amino-acid sequence, 500 residues long: FAD-linked oxidoreductase easE (500 aa).

In terms of domain architecture, FAD-binding PCMH-type spans 37 to 220 (QGRIPLFTVG…TRATMRVFPD (184 aa)).

Belongs to the oxygen-dependent FAD-linked oxidoreductase family. It depends on FAD as a cofactor.

It participates in alkaloid biosynthesis; ergot alkaloid biosynthesis. Functionally, FAD-linked oxidoreductase; part of the gene cluster that mediates the biosynthesis of fungal ergot alkaloid. DmaW catalyzes the first step of ergot alkaloid biosynthesis by condensing dimethylallyl diphosphate (DMAP) and tryptophan to form 4-dimethylallyl-L-tryptophan. The second step is catalyzed by the methyltransferase easF that methylates 4-dimethylallyl-L-tryptophan in the presence of S-adenosyl-L-methionine, resulting in the formation of 4-dimethylallyl-L-abrine. The catalase easC and the FAD-dependent oxidoreductase easE then transform 4-dimethylallyl-L-abrine to chanoclavine-I which is further oxidized by easD in the presence of NAD(+), resulting in the formation of chanoclavine-I aldehyde. Chanoclavine-I aldehyde is the precursor of ergoamides and ergopeptines in Clavicipitaceae, and clavine-type alcaloids such as fumiclavine in Trichocomaceae. However, the metabolites downstream of chanoclavine-I aldehyde in Arthrodermataceae have not been identified yet. The polypeptide is FAD-linked oxidoreductase easE (Arthroderma benhamiae (strain ATCC MYA-4681 / CBS 112371) (Trichophyton mentagrophytes)).